The sequence spans 234 residues: 2-C-methyl-D-erythritol 4-phosphate cytidylyltransferase (234 aa).

The protein belongs to the IspD/TarI cytidylyltransferase family. IspD subfamily.

The enzyme catalyses 2-C-methyl-D-erythritol 4-phosphate + CTP + H(+) = 4-CDP-2-C-methyl-D-erythritol + diphosphate. Its pathway is isoprenoid biosynthesis; isopentenyl diphosphate biosynthesis via DXP pathway; isopentenyl diphosphate from 1-deoxy-D-xylulose 5-phosphate: step 2/6. Functionally, catalyzes the formation of 4-diphosphocytidyl-2-C-methyl-D-erythritol from CTP and 2-C-methyl-D-erythritol 4-phosphate (MEP). The protein is 2-C-methyl-D-erythritol 4-phosphate cytidylyltransferase of Pseudomonas aeruginosa (strain UCBPP-PA14).